We begin with the raw amino-acid sequence, 316 residues long: Homoserine kinase (316 aa).

97-107 (PPARGLGSSAS) is an ATP binding site.

Belongs to the GHMP kinase family. Homoserine kinase subfamily.

It is found in the cytoplasm. It catalyses the reaction L-homoserine + ATP = O-phospho-L-homoserine + ADP + H(+). Its pathway is amino-acid biosynthesis; L-threonine biosynthesis; L-threonine from L-aspartate: step 4/5. Catalyzes the ATP-dependent phosphorylation of L-homoserine to L-homoserine phosphate. This is Homoserine kinase from Prochlorococcus marinus (strain MIT 9313).